The chain runs to 318 residues: MSDIKHAKLLILGSGPAGYTAAIYAARANLKPVLVTGLQQGGQLTTTDEIENWPGDFEMTTGSGLMQRMLQHAEKFETEIVFDHINRVDLSSRPFKLFGDVQNFTCDALIIATGASARYIGLPSEENYKGRGVSACATCDGFFYRNKPVGVIGGGNTAVEEALYLANIASTVHLIHRRDSFRAEKILIDRLYKKVEEGKIVLHTDRTLDEVLGDNMGVTGLRLANTKTGEKEELKLDGLFVAIGHSPNTEIFQGQLELNNGYIVVKSGLDGNATATSVEGVFAAGDVMDHNYRQAITSAGTGCMAALDAERYLDAQEA.

36–43 (TGLQQGGQ) lines the FAD pocket. A disulfide bridge links Cys-136 with Cys-139. 286–295 (DVMDHNYRQA) serves as a coordination point for FAD.

It belongs to the class-II pyridine nucleotide-disulfide oxidoreductase family. Homodimer. It depends on FAD as a cofactor.

It is found in the cytoplasm. The catalysed reaction is [thioredoxin]-dithiol + NADP(+) = [thioredoxin]-disulfide + NADPH + H(+). The chain is Thioredoxin reductase (trxB) from Haemophilus influenzae (strain ATCC 51907 / DSM 11121 / KW20 / Rd).